The sequence spans 121 residues: Replication protein A 14 kDa subunit (121 aa).

Val2 bears the N-acetylvaline mark. Residues Lys23, Lys39, and Lys88 each participate in a glycyl lysine isopeptide (Lys-Gly) (interchain with G-Cter in ubiquitin) cross-link.

It belongs to the replication factor A protein 3 family. In terms of assembly, component of the canonical replication protein A complex (RPA), a heterotrimer composed of RPA1, RPA2 and RPA3. Also a component of the aRPA, the alternative replication protein A complex, a trimeric complex similar to the replication protein A complex/RPA but where RPA1 and RPA3 are associated with RPA4 instead of RPA2. Interacts with BRIP1/FANCJ via the RPA1 subunit; following DNA damage they colocalize in foci in the nucleus. In terms of processing, ubiquitinated by RFWD3 at stalled replication forks in response to DNA damage: ubiquitination by RFWD3 does not lead to degradation by the proteasome and promotes removal of the RPA complex from stalled replication forks, promoting homologous recombination.

The protein localises to the nucleus. Functionally, as part of the heterotrimeric replication protein A complex (RPA/RP-A), binds and stabilizes single-stranded DNA intermediates that form during DNA replication or upon DNA stress. It prevents their reannealing and in parallel, recruits and activates different proteins and complexes involved in DNA metabolism. Thereby, it plays an essential role both in DNA replication and the cellular response to DNA damage. In the cellular response to DNA damage, the RPA complex controls DNA repair and DNA damage checkpoint activation. Through recruitment of ATRIP activates the ATR kinase a master regulator of the DNA damage response. It is required for the recruitment of the DNA double-strand break repair factors RAD51 and RAD52 to chromatin, in response to DNA damage. Also recruits to sites of DNA damage proteins like XPA and XPG that are involved in nucleotide excision repair and is required for this mechanism of DNA repair. Also plays a role in base excision repair (BER), probably through interaction with UNG. RPA stimulates 5'-3' helicase activity of BRIP1/FANCJ. Also recruits SMARCAL1/HARP, which is involved in replication fork restart, to sites of DNA damage. May also play a role in telomere maintenance. RPA3 has its own single-stranded DNA-binding activity and may be responsible for polarity of the binding of the complex to DNA. As part of the alternative replication protein A complex, aRPA, binds single-stranded DNA and probably plays a role in DNA repair. Compared to the RPA2-containing, canonical RPA complex, may not support chromosomal DNA replication and cell cycle progression through S-phase. The aRPA may not promote efficient priming by DNA polymerase alpha but could support DNA synthesis by polymerase delta in presence of PCNA and replication factor C (RFC), the dual incision/excision reaction of nucleotide excision repair and RAD51-dependent strand exchange. This is Replication protein A 14 kDa subunit (RPA3) from Homo sapiens (Human).